Reading from the N-terminus, the 347-residue chain is Calcium homeostasis modulator protein 3 (347 aa).

The Cytoplasmic segment spans residues 1–20 (MDRFRMLFQHLQSSSESVMN). The interval 9–36 (QHLQSSSESVMNGICLLLAAVTVKIYSS) is central pore. The chain crosses the membrane as a helical span at residues 21 to 36 (GICLLLAAVTVKIYSS). The Extracellular portion of the chain corresponds to 37 to 48 (LDFNCPCLERYN). 2 disulfide bridges follow: Cys41–Cys126 and Cys43–Cys157. A helical membrane pass occupies residues 49 to 71 (ALYGLGLLLTPPLALFLCGLLVN). Residues 72-98 (RQSVLMVEEWRRPAGHRRKDLGIIRYM) are Cytoplasmic-facing. Cys99 carries S-palmitoyl cysteine lipidation. A helical membrane pass occupies residues 99-124 (CSSVLQRALAAPLVWILLALLDGKCF). Residues 125-176 (VCAFSNSVDPEKFLDFANMTPRQVQLFLAKVPCKEDELVKNSPARKAVSRYL) are Extracellular-facing. Residue Asn142 is glycosylated (N-linked (GlcNAc...) asparagine). The chain crosses the membrane as a helical span at residues 177–202 (RCLSQAIGWSITLLVIVVAFLARCLR). 2 S-palmitoyl cysteine lipidation sites follow: Cys200 and Cys204. The Cytoplasmic segment spans residues 203–347 (PCFDQTVFLQ…GTKLCHQLNV (145 aa)). Positions 265–290 (GGIPESQESSEPPELREDRDSGNGKA) are disordered. The segment covering 277-286 (PELREDRDSG) has biased composition (basic and acidic residues).

The protein belongs to the CALHM family. In terms of assembly, associates with CALHM1 as a pore-forming subunit in a hetero-hexameric channel complex. In terms of processing, N-glycosylated. Post-translationally, palmitoylated by ZDHHC3 and ZDHHC15. Palmitoylation positively regulates CALHM1:CALHM3 channel conductance. In terms of tissue distribution, expressed in taste bud cells.

Its subcellular location is the basolateral cell membrane. It catalyses the reaction ATP(in) = ATP(out). The catalysed reaction is Ca(2+)(in) = Ca(2+)(out). The enzyme catalyses Na(+)(in) = Na(+)(out). It carries out the reaction K(+)(in) = K(+)(out). It catalyses the reaction chloride(in) = chloride(out). In terms of biological role, pore-forming subunit of gustatory voltage-gated ion channels required for sensory perception of sweet, bitter and umami tastes. With CALHM1 forms a fast-activating voltage-gated ATP-release channel in type II taste bud cells, ATP acting as a neurotransmitter to activate afferent neural gustatory pathways. Acts both as a voltage-gated and calcium-activated ion channel: mediates neuronal excitability in response to membrane depolarization and low extracellular Ca(2+) concentration. Has poor ion selectivity and forms a wide pore (around 14 Angstroms) that mediates permeation of small ions including Ca(2+), Na(+), K(+) and Cl(-), as well as larger ions such as ATP(4-). This is Calcium homeostasis modulator protein 3 from Mus musculus (Mouse).